A 420-amino-acid chain; its full sequence is Glucose-1-phosphate adenylyltransferase (420 aa).

Alpha-D-glucose 1-phosphate is bound by residues Tyr-107, Gly-172, 187 to 188, and Ser-205; that span reads EK.

Belongs to the bacterial/plant glucose-1-phosphate adenylyltransferase family. As to quaternary structure, homotetramer.

It catalyses the reaction alpha-D-glucose 1-phosphate + ATP + H(+) = ADP-alpha-D-glucose + diphosphate. It functions in the pathway glycan biosynthesis; glycogen biosynthesis. In terms of biological role, involved in the biosynthesis of ADP-glucose, a building block required for the elongation reactions to produce glycogen. Catalyzes the reaction between ATP and alpha-D-glucose 1-phosphate (G1P) to produce pyrophosphate and ADP-Glc. This is Glucose-1-phosphate adenylyltransferase from Rhizobium meliloti (strain 1021) (Ensifer meliloti).